Here is a 335-residue protein sequence, read N- to C-terminus: Antigen-presenting glycoprotein CD1d (335 aa).

The first 17 residues, 1-17 (MGCLLFLVLLEFQKIWG), serve as a signal peptide directing secretion. Residues 18 to 304 (SFEAPQTSFP…WDGKRVSRGL (287 aa)) are Extracellular-facing. N-linked (GlcNAc...) asparagine glycans are attached at residues Asn-38 and Asn-60. Asp-98 provides a ligand contact to a D-galactosylceramide. Disulfide bonds link Cys-120–Cys-184 and Cys-224–Cys-279. Asn-126 is a glycosylation site (N-linked (GlcNAc...) asparagine). Residues Asp-169, 169-172 (DQGT), and Thr-172 contribute to the a D-galactosylceramide site. The Ig-like domain maps to 185-295 (PELVKGLMQT…LGDQDIILYW (111 aa)). Residues 305 to 325 (IVVLVILVFVLLFVGGLVFWF) traverse the membrane as a helical segment. Topologically, residues 326–335 (RKHRRYQDIS) are cytoplasmic. Residues 331–334 (YQDI) carry the Internalization signal motif.

As to quaternary structure, heterodimer with B2M (beta-2-microglobulin). Interacts with MHC II and CD74. Expressed on cortical thymocytes, on certain T-cell leukemias, and in various other tissues.

It is found in the cell membrane. Its subcellular location is the basolateral cell membrane. It localises to the endosome membrane. The protein localises to the lysosome membrane. The protein resides in the endoplasmic reticulum membrane. Its function is as follows. Antigen-presenting protein that binds self and non-self glycolipids and presents them to T-cell receptors on natural killer T-cells. The chain is Antigen-presenting glycoprotein CD1d (CD1D) from Ovis aries (Sheep).